Reading from the N-terminus, the 459-residue chain is Transmembrane protein 143 (459 aa).

A run of 2 helical transmembrane segments spans residues 280–300 (LLNL…GMVV) and 301–321 (LTDL…FMGL). Phosphoserine is present on S332. Residues 435-459 (GFPKLDPVAPITSEPPQATPSSNIS) form a disordered region. The segment covering 448-459 (EPPQATPSSNIS) has biased composition (polar residues).

It is found in the membrane. This chain is Transmembrane protein 143 (TMEM143), found in Homo sapiens (Human).